A 464-amino-acid chain; its full sequence is Neuronal acetylcholine receptor subunit beta-3 (464 aa).

The first 30 residues, Met1–Ser30, serve as a signal peptide directing secretion. At Val31–Leu238 the chain is on the extracellular side. N-linked (GlcNAc...) asparagine glycosylation is found at Asn55 and Asn172. A disulfide bridge links Cys159 with Cys173. A run of 3 helical transmembrane segments spans residues Pro239 to Leu263, Leu271 to Ile288, and Tyr305 to Val326. Over His327–Arg434 the chain is Cytoplasmic. A helical transmembrane segment spans residues Ile435 to Ile453.

This sequence belongs to the ligand-gated ion channel (TC 1.A.9) family. Acetylcholine receptor (TC 1.A.9.1) subfamily. Beta-3/CHRNB3 sub-subfamily. Neuronal AChR seems to be composed of two different type of subunits: alpha and beta. CHRNB3/beta-3 subunit is only able to form functional nAChRs when co-assembled with another beta subunit. Participates in pentameric assemblies along with CHRNA4/alpha-4 and CHRNB2/beta-2 subunits and with CHRNA6/alpha-6 as well, forming stoichiometries such as (CHRNA3:CHRNB4)2:CHRNB3, (CHRNA4:CHRNB2)2:CHRNB3 or (CHRNA6:CHRNB2)2:CHRNB3.

The protein resides in the synaptic cell membrane. It localises to the cell membrane. The enzyme catalyses Ca(2+)(in) = Ca(2+)(out). It carries out the reaction K(+)(in) = K(+)(out). It catalyses the reaction Na(+)(in) = Na(+)(out). Activated by a myriad of ligands such as acetylcholine, cytisine, nicotine, choline and epibatidine. In terms of biological role, component of neuronal acetylcholine receptors (nAChRs) that function as pentameric, ligand-gated cation channels with high calcium permeability among other activities. nAChRs are excitatory neurotrasnmitter receptors formed by a collection of nAChR subunits known to mediate synaptic transmission in the nervous system and the neuromuscular junction. Each nAchR subunit confers differential attributes to channel properties, including activation, deactivation and desensitization kinetics, pH sensitivity, cation permeability, and binding to allosteric modulators. Has an accessory rather than functional role and is only able to form functional nAChRs when co-assembled with another beta subunit. Participates in pentameric assemblies along with CHRNA3, CHRNA4, CHRNA6, CHRNB2 and CHRNB4. Modulates receptor assembly and increases receptor sensitivity to nicotine when associated with CHRNB2, CHRNA4 and/or CHRNA6 as well as CHRNA3 and CHRNB4. Seems to play a role in nicotine addiction. The protein is Neuronal acetylcholine receptor subunit beta-3 (Chrnb3) of Rattus norvegicus (Rat).